The chain runs to 813 residues: MNCNVLFLLSVLVSVTAGVTAAYHPTDVFLFNCGDTSNNVDNSGRNWTVESRQILSSNLVNASFTSEASYQKAGVSRIPYMKARIFRSEFTYSFPVTPGSIFLRLYFYPTQYKSGFDAVNSFFSVKVNGFTLLRNFNADSTVQASIPLSNSLIKEFIIPVHQTLNLTFTPSKNLLAFVNGIEIVSMPDRFYSKGGFDNVLRNVSSDVDFQIDNSTAFESVHRLNVGGQIVNEVDDSGMFRRWLSDDSFGNSGSIVNVPGVKINYTEKTPAYVAPYDVYATSRLMGNSSNLMFNLTGMFLTVDAGYNYLVRLHFCETLPQVTKAGQRVFSIFVEDKMAKKETDVIRLSGGPRIPMYLDFSVYVGFESGMIQPELRLDLVPLKDTNQTYYDAILSGVEILKLNDSDGNLARPNPELLVSTDSTPDDSNVTPPIKGKPHVLVIILIVVGSVIGLATFIVIIMLLIRQMKRKKNKKENSVIMFKLLLKQYIYAELKKITKSFSHTVGKGGFGTVYRGNLSNGRTVAVKVLKDLKGNGDDFINEVTSMSQTSHVNIVSLLGFCYEGSKRAIISEFLEHGSLDQFISRNKSLTPNVTTLYGIALGIARGLEYLHYGCKTRIVHFDIKPQNILLDDNFCPKVADFGLAKLCEKRESILSLIDTRGTIGYIAPEVVSRMYGGISHKSDVYSYGMLVLDMIGARNKVETTTCNGSTAYFPDWIYKDLENGDQTWIIGDEINEEDNKIVKKMILVSLWCIRPCPSDRPPMNKVVEMIEGSLDALELPPKPSRHISTELVLESSSLSDGQEAEKQTQTLDSTII.

The N-terminal stretch at 1–21 (MNCNVLFLLSVLVSVTAGVTA) is a signal peptide. Residues 22–437 (AYHPTDVFLF…TPPIKGKPHV (416 aa)) lie on the Extracellular side of the membrane. Asparagine 46, asparagine 61, asparagine 165, asparagine 202, asparagine 213, asparagine 263, asparagine 286, asparagine 293, asparagine 384, and asparagine 401 each carry an N-linked (GlcNAc...) asparagine glycan. A helical membrane pass occupies residues 438–458 (LVIILIVVGSVIGLATFIVII). The Cytoplasmic portion of the chain corresponds to 459 to 813 (MLLIRQMKRK…QTQTLDSTII (355 aa)). Residues 496-771 (KSFSHTVGKG…KVVEMIEGSL (276 aa)) enclose the Protein kinase domain. ATP contacts are provided by residues 502-510 (VGKGGFGTV) and lysine 524. The active-site Proton acceptor is aspartate 619. A disordered region spans residues 791–813 (ESSSLSDGQEAEKQTQTLDSTII). A compositionally biased stretch (polar residues) spans 804–813 (QTQTLDSTII).

Belongs to the protein kinase superfamily. Ser/Thr protein kinase family.

It is found in the membrane. This chain is Probable receptor-like protein kinase At5g39020, found in Arabidopsis thaliana (Mouse-ear cress).